A 186-amino-acid chain; its full sequence is Auxin-responsive protein IAA4 (186 aa).

An EAR-like (transcriptional repression) motif is present at residues 18–22 (LRLGL). Residues 25–62 (TEETVSCGKSNKRVLPEATEKEIESTGKTETASPPKAQ) are disordered. Basic and acidic residues predominate over residues 38-51 (VLPEATEKEIESTG). The PB1 domain occupies 88–175 (GNYVKVSMDG…SCKRLRIMKG (88 aa)).

The protein belongs to the Aux/IAA family. In terms of assembly, homodimers and heterodimers. Interacts with TPL. Preferentially expressed in stems, leaves and flowers.

The protein resides in the nucleus. Functionally, aux/IAA proteins are short-lived transcriptional factors that function as repressors of early auxin response genes at low auxin concentrations. Repression is thought to result from the interaction with auxin response factors (ARFs), proteins that bind to the auxin-responsive promoter element (AuxRE). Formation of heterodimers with ARF proteins may alter their ability to modulate early auxin response genes expression. In Arabidopsis thaliana (Mouse-ear cress), this protein is Auxin-responsive protein IAA4 (IAA4).